Reading from the N-terminus, the 520-residue chain is MGDKAILTEVLEASNLTEAYVDLTAKQLIKEIRHVGDDFAVRYSNLDDRTELGEPTDQRSPDSEKTFTVDEAVEALGFGRFQLKLSILTGMAWMADAMEMMLLSLISPALACEWGISSVQQALVTTCVFSGMMLSSTFWGKICDRFGRRKGLTFSTLVACIMGVISGMSPHFYVLLFFRGLTGFGIGGVPQSVTLYAEFLPTAQRAKCVVLIESFWAIGAVFEALLAYFVMESFGWRALMFLSSLPLGIFAVASFWLPESARFDMASGHPERALETLQAAARMNRVQLPTGRLVSSTKAGSESRGDIANLLSPDLRKTTILLWCIWAITAFSYYGMVLFTTVLFQSHDECHGGLFSNGTQMEVCQPLTRSDYFDLLSTTLAEFPGLIITVLIIEWFGRKKTMALEYAVFAIFTFLLYFCLDRFTVTVLIFVARAFISGAFQCAYVYTPEVYPTTLRAVGLGTCSAMARIGAIVTPFIAQVASEKSLSLPIGIYGTAAILGLIASLSLPIETKGRQMMDSH.

Residues 1–85 (MGDKAILTEV…LGFGRFQLKL (85 aa)) are Cytoplasmic-facing. A helical transmembrane segment spans residues 86-106 (SILTGMAWMADAMEMMLLSLI). Residues 107-120 (SPALACEWGISSVQ) lie on the Extracellular side of the membrane. A helical membrane pass occupies residues 121–141 (QALVTTCVFSGMMLSSTFWGK). Over 142–157 (ICDRFGRRKGLTFSTL) the chain is Cytoplasmic. The helical transmembrane segment at 158–178 (VACIMGVISGMSPHFYVLLFF) threads the bilayer. A topological domain (extracellular) is located at residue R179. A helical membrane pass occupies residues 180–200 (GLTGFGIGGVPQSVTLYAEFL). The Cytoplasmic portion of the chain corresponds to 201-208 (PTAQRAKC). Residues 209–229 (VVLIESFWAIGAVFEALLAYF) form a helical membrane-spanning segment. Residues 230 to 237 (VMESFGWR) lie on the Extracellular side of the membrane. Residues 238-258 (ALMFLSSLPLGIFAVASFWLP) traverse the membrane as a helical segment. Topologically, residues 259-319 (ESARFDMASG…LLSPDLRKTT (61 aa)) are cytoplasmic. Residues 320–340 (ILLWCIWAITAFSYYGMVLFT) traverse the membrane as a helical segment. Residues 341–372 (TVLFQSHDECHGGLFSNGTQMEVCQPLTRSDY) lie on the Extracellular side of the membrane. The helical transmembrane segment at 373-393 (FDLLSTTLAEFPGLIITVLII) threads the bilayer. The Cytoplasmic segment spans residues 394–410 (EWFGRKKTMALEYAVFA). Residues 411 to 431 (IFTFLLYFCLDRFTVTVLIFV) traverse the membrane as a helical segment. At 432–434 (ARA) the chain is on the extracellular side. The helical transmembrane segment at 435–455 (FISGAFQCAYVYTPEVYPTTL) threads the bilayer. Topologically, residues 456 to 461 (RAVGLG) are cytoplasmic. The chain crosses the membrane as a helical span at residues 462-487 (TCSAMARIGAIVTPFIAQVASEKSLS). Topologically, residues 488 to 489 (LP) are extracellular. A helical transmembrane segment spans residues 490–509 (IGIYGTAAILGLIASLSLPI). Residues 510–520 (ETKGRQMMDSH) are Cytoplasmic-facing.

This sequence belongs to the major facilitator superfamily.

Its subcellular location is the membrane. The sequence is that of Putative transporter svop-1 from Caenorhabditis elegans.